A 184-amino-acid chain; its full sequence is Ethylene-responsive transcription factor ERF122 (184 aa).

The AP2/ERF DNA-binding region spans 120–177 (KYKGVRKKPSGKWAAEIWDPRSKSRRWLGTFLTAEMAAQSYNDAAAEYRARRGKTNGE).

This sequence belongs to the AP2/ERF transcription factor family. ERF subfamily.

It is found in the nucleus. Functionally, probably acts as a transcriptional activator. Binds to the GCC-box pathogenesis-related promoter element. May be involved in the regulation of gene expression by stress factors and by components of stress signal transduction pathways. The polypeptide is Ethylene-responsive transcription factor ERF122 (ERF122) (Arabidopsis thaliana (Mouse-ear cress)).